The following is a 261-amino-acid chain: Cytochrome c oxidase subunit 3 (261 aa).

Residues 1-15 (MTHQTHAYHMVNPSP) lie on the Mitochondrial matrix side of the membrane. The helical transmembrane segment at 16–34 (WPLTGALSALLMTSGLIMW) threads the bilayer. Over 35–40 (FHFNST) the chain is Mitochondrial intermembrane. A helical transmembrane segment spans residues 41 to 66 (ALLMLGLTTNMLTMYQWWRDIIREST). The Mitochondrial matrix segment spans residues 67–72 (FQGHHT). Residues 73 to 105 (PVVQKGLRYGMILFIISEVLFFTGFFWAFYHSS) traverse the membrane as a helical segment. Residues 106–128 (LAPTPELGGCWPPTGINPLNPLE) are Mitochondrial intermembrane-facing. A helical transmembrane segment spans residues 129–152 (VPLLNTSVLLASGVSITWAHHSLM). Topologically, residues 153-155 (EGN) are mitochondrial matrix. The helical transmembrane segment at 156–183 (RSHMLQALFITITLGVYFTLLQASEYYE) threads the bilayer. Residues 184 to 190 (APFTISD) are Mitochondrial intermembrane-facing. A helical membrane pass occupies residues 191 to 223 (GVYGSTFFVATGFHGLHVIIGSTFLIVCFFRQL). Residues 224–232 (KFHFTSNHH) lie on the Mitochondrial matrix side of the membrane. The helical transmembrane segment at 233–256 (FGFEAAAWYWHFVDVVWLFLYVSI) threads the bilayer. Residues 257-261 (YWWGS) lie on the Mitochondrial intermembrane side of the membrane.

Belongs to the cytochrome c oxidase subunit 3 family. In terms of assembly, component of the cytochrome c oxidase (complex IV, CIV), a multisubunit enzyme composed of 14 subunits. The complex is composed of a catalytic core of 3 subunits MT-CO1, MT-CO2 and MT-CO3, encoded in the mitochondrial DNA, and 11 supernumerary subunits COX4I, COX5A, COX5B, COX6A, COX6B, COX6C, COX7A, COX7B, COX7C, COX8 and NDUFA4, which are encoded in the nuclear genome. The complex exists as a monomer or a dimer and forms supercomplexes (SCs) in the inner mitochondrial membrane with NADH-ubiquinone oxidoreductase (complex I, CI) and ubiquinol-cytochrome c oxidoreductase (cytochrome b-c1 complex, complex III, CIII), resulting in different assemblies (supercomplex SCI(1)III(2)IV(1) and megacomplex MCI(2)III(2)IV(2)).

It is found in the mitochondrion inner membrane. The enzyme catalyses 4 Fe(II)-[cytochrome c] + O2 + 8 H(+)(in) = 4 Fe(III)-[cytochrome c] + 2 H2O + 4 H(+)(out). Functionally, component of the cytochrome c oxidase, the last enzyme in the mitochondrial electron transport chain which drives oxidative phosphorylation. The respiratory chain contains 3 multisubunit complexes succinate dehydrogenase (complex II, CII), ubiquinol-cytochrome c oxidoreductase (cytochrome b-c1 complex, complex III, CIII) and cytochrome c oxidase (complex IV, CIV), that cooperate to transfer electrons derived from NADH and succinate to molecular oxygen, creating an electrochemical gradient over the inner membrane that drives transmembrane transport and the ATP synthase. Cytochrome c oxidase is the component of the respiratory chain that catalyzes the reduction of oxygen to water. Electrons originating from reduced cytochrome c in the intermembrane space (IMS) are transferred via the dinuclear copper A center (CU(A)) of subunit 2 and heme A of subunit 1 to the active site in subunit 1, a binuclear center (BNC) formed by heme A3 and copper B (CU(B)). The BNC reduces molecular oxygen to 2 water molecules using 4 electrons from cytochrome c in the IMS and 4 protons from the mitochondrial matrix. The chain is Cytochrome c oxidase subunit 3 (MT-CO3) from Syncerus caffer (African buffalo).